The sequence spans 468 residues: MANTPDKSSMWGGRFGGGPAAIMQEINASIPIDKRLWEEDIAASRAHAAMLGACRIISADDAAAIDRGLAQIAEEFAENGVPVDLSLEDIHMTVEARLKELIGEPAGRLHTARSRNDQVATDFRLWTRTACERIDAGLAALQSALLQRADEHADSIMPGFTHLQVAQPVTLGHHLLAYVEMARRDRGRFADARRRLNESPLGAAALAGTGFPVDRDATAAALGFDRPMANSIDAVSDRDFALEFCAAAAIAAIHLSRLAEEIVIWASQPFGFVALPDAWSTGSSIMPQKRNPDAAELVRGRAGLLLGAFQRLAVIVKGLPLTYSKDLQDDKETLFGAFDALALSLAAMTGMVETLSFRTDRMRALAASGYSTATDLADWLVREAGLPFREAHHVVGACVRRAEELGVELPALPAADAAAIHAAVTPDVLAALTVEASVASRMSYGGTAPERVRQAIAAARAAAAQGQD.

The protein belongs to the lyase 1 family. Argininosuccinate lyase subfamily.

The protein localises to the cytoplasm. It catalyses the reaction 2-(N(omega)-L-arginino)succinate = fumarate + L-arginine. The protein operates within amino-acid biosynthesis; L-arginine biosynthesis; L-arginine from L-ornithine and carbamoyl phosphate: step 3/3. In Sphingopyxis alaskensis (strain DSM 13593 / LMG 18877 / RB2256) (Sphingomonas alaskensis), this protein is Argininosuccinate lyase.